The sequence spans 152 residues: SsrA-binding protein (152 aa).

The protein belongs to the SmpB family.

Its subcellular location is the cytoplasm. Required for rescue of stalled ribosomes mediated by trans-translation. Binds to transfer-messenger RNA (tmRNA), required for stable association of tmRNA with ribosomes. tmRNA and SmpB together mimic tRNA shape, replacing the anticodon stem-loop with SmpB. tmRNA is encoded by the ssrA gene; the 2 termini fold to resemble tRNA(Ala) and it encodes a 'tag peptide', a short internal open reading frame. During trans-translation Ala-aminoacylated tmRNA acts like a tRNA, entering the A-site of stalled ribosomes, displacing the stalled mRNA. The ribosome then switches to translate the ORF on the tmRNA; the nascent peptide is terminated with the 'tag peptide' encoded by the tmRNA and targeted for degradation. The ribosome is freed to recommence translation, which seems to be the essential function of trans-translation. This is SsrA-binding protein from Rickettsia canadensis (strain McKiel).